The primary structure comprises 229 residues: Prolactin (229 aa).

The N-terminal stretch at Met-1–Ser-30 is a signal peptide. Cys-34 and Cys-41 form a disulfide bridge. Residues Ser-56, Ser-64, and Ser-120 each carry the phosphoserine modification. 2 cysteine pairs are disulfide-bonded: Cys-88-Cys-204 and Cys-221-Cys-229.

This sequence belongs to the somatotropin/prolactin family. As to quaternary structure, interacts with PRLR.

It is found in the secreted. Its function is as follows. Prolactin acts primarily on the mammary gland by promoting lactation. In Ailuropoda melanoleuca (Giant panda), this protein is Prolactin (PRL).